A 304-amino-acid chain; its full sequence is UDP-3-O-acyl-N-acetylglucosamine deacetylase (304 aa).

3 residues coordinate Zn(2+): H78, H237, and D241. The active-site Proton donor is the H264.

This sequence belongs to the LpxC family. Requires Zn(2+) as cofactor.

It carries out the reaction a UDP-3-O-[(3R)-3-hydroxyacyl]-N-acetyl-alpha-D-glucosamine + H2O = a UDP-3-O-[(3R)-3-hydroxyacyl]-alpha-D-glucosamine + acetate. It functions in the pathway glycolipid biosynthesis; lipid IV(A) biosynthesis; lipid IV(A) from (3R)-3-hydroxytetradecanoyl-[acyl-carrier-protein] and UDP-N-acetyl-alpha-D-glucosamine: step 2/6. Its function is as follows. Catalyzes the hydrolysis of UDP-3-O-myristoyl-N-acetylglucosamine to form UDP-3-O-myristoylglucosamine and acetate, the committed step in lipid A biosynthesis. This is UDP-3-O-acyl-N-acetylglucosamine deacetylase from Polynucleobacter necessarius subsp. necessarius (strain STIR1).